A 714-amino-acid chain; its full sequence is MPAAAGDGLLGEPAAPGGGGGAEDAARPAAACEGSFLPAWVSGVPRERLRDFQHHKRVGNYLIGSRKLGEGSFAKVREGLHVLTGEKVAIKVIDKKRAKKDTYVTKNLRREGQIQQMIRHPNITQLLDILETENSYYLVMELCPGGNLMHKIYEKKRLEESEARRYIRQLISAVEHLHRAGVVHRDLKIENLLLDEDNNIKLIDFGLSNCAGILGYSDPFSTQCGSPAYAAPELLARKKYGPKIDVWSIGVNMYAMLTGTLPFTVEPFSLRALYQKMVDKEMNPLPTQLSTGAISFLRSLLEPDPVKRPNIQQALANRWLNENYTGKVPCNVTYPNRISLEDLSPSVVLHMTEKLGYKNSDVINTVLSNRACHILAIYFLLNKKLERYLSGKSDIQDSLCYKTRLYQIEKYRAPKESYEASLDTWTRDLEFHAVQDKKPKEQEKRGDFLHRPFSKKLDKNLPSHKQPSGSLMTQIQNTKALLKDRKASKSSFPDKDSFGCRNIFRKTSDSNCVASSSMEFIPVPPPRTPRIVKKPEPHQPGPGSTGIPHKEDPLMLDMVRSFESVDRDDHIEVLSPSHHYRILNSPVSLARRNSSERTLSPGLPSGSMSPLHTPLHPTLVSFAHEDKNSPPKEEGLCSPPPVPSNGPMQPLGSPNCVKSRGRFPMMGIGQMLRKRHQSLQPSADRPLEASLPPLQPLAPVNLAFDMADGVKTQC.

Residues 1-15 are compositionally biased toward low complexity; it reads MPAAAGDGLLGEPAA. A disordered region spans residues 1–26; it reads MPAAAGDGLLGEPAAPGGGGGAEDAA. The Protein kinase domain occupies 62 to 320; that stretch reads LIGSRKLGEG…IQQALANRWL (259 aa). ATP-binding positions include 68 to 76 and lysine 91; that span reads LGEGSFAKV. Catalysis depends on aspartate 186, which acts as the Proton acceptor. Residues 437-461 are compositionally biased toward basic and acidic residues; that stretch reads KKPKEQEKRGDFLHRPFSKKLDKNL. Disordered stretches follow at residues 437-471, 518-552, and 590-660; these read KKPKEQEKRGDFLHRPFSKKLDKNLPSHKQPSGSL, MEFIPVPPPRTPRIVKKPEPHQPGPGSTGIPHKED, and ARRN…VKSR. A compositionally biased stretch (low complexity) spans 599–611; it reads LSPGLPSGSMSPL. Over residues 623-635 the composition is skewed to basic and acidic residues; the sequence is AHEDKNSPPKEEG.

The protein belongs to the protein kinase superfamily. CAMK Ser/Thr protein kinase family. SNF1 subfamily.

It catalyses the reaction L-seryl-[protein] + ATP = O-phospho-L-seryl-[protein] + ADP + H(+). The enzyme catalyses L-threonyl-[protein] + ATP = O-phospho-L-threonyl-[protein] + ADP + H(+). The chain is Hormonally up-regulated neu tumor-associated kinase (HUNK) from Pan troglodytes (Chimpanzee).